The chain runs to 385 residues: Signal transduction histidine-protein kinase/phosphatase DegS (385 aa).

Residues 31-141 (QIGEQSRQQY…IERSESLVSQ (111 aa)) are a coiled coil. Position 76 is a phosphoserine (serine 76). Positions 183-385 (RVSREIHDGP…FIMIKVPLSL (203 aa)) constitute a Histidine kinase domain. Histidine 189 carries the phosphohistidine; by autocatalysis modification.

Post-translationally, autophosphorylated. Phosphorylated in vitro at Ser-76 by the serine/threonine-protein kinase YbdM, which stimulates the phosphate transfer to DegU.

The protein resides in the cytoplasm. The enzyme catalyses ATP + protein L-histidine = ADP + protein N-phospho-L-histidine.. With respect to regulation, regulated via serine phosphorylation of its input domain. Phosphotransfer from DegS to DegU is stimulated by phosphorylation on Ser-76 and by DegQ. Member of the two-component regulatory system DegS/DegU, which plays an important role in the transition growth phase. Involved in the control of expression of different cellular functions, including production of degradative enzymes such as the neutral and alkaline proteases, flagellum formation and biofilm formation. Acts both as a protein kinase that undergoes autophosphorylation and subsequently transfers the phosphate to DegU, and as a protein phosphatase that dephosphorylates phospho-DegU. The polypeptide is Signal transduction histidine-protein kinase/phosphatase DegS (degS) (Bacillus subtilis (strain 168)).